The chain runs to 217 residues: Kunitz-type trypsin inhibitor-like 1 protein (217 aa).

Positions 1-26 are cleaved as a signal peptide; sequence MKPLSPLTLSFFLFVFITNLSLAFSN. 2 disulfides stabilise this stretch: Cys70-Cys115 and Cys168-Cys175. An N-linked (GlcNAc...) asparagine glycan is attached at Asn191.

The protein belongs to the protease inhibitor I3 (leguminous Kunitz-type inhibitor) family. In terms of tissue distribution, expressed in roots, leaves, epidermal layers of elongating stems, meristems and in the vascular system.

It is found in the secreted. Functionally, might act as a protease inhibitor involved in plant defense responses. The chain is Kunitz-type trypsin inhibitor-like 1 protein (PIP20-1) from Pisum sativum (Garden pea).